We begin with the raw amino-acid sequence, 505 residues long: Circadian clock protein KaiC3 (505 aa).

KaiC domains are found at residues 10–252 and 253–485; these read EKLE…KSSD and IRIT…LAGT. A Phosphoserine; by autocatalysis modification is found at Ser423. Thr424 is modified (phosphothreonine; by autocatalysis).

The protein belongs to the KaiC family. As to quaternary structure, multimerizes, probably forming homohexamers, no interaction with KaiC1 or KaiC2 is seen. In another study forms hexamers, interacts with KaiB1, KaiB3, and KaiC1. Autophosphorylates and dephosphorylates. Dephosphorylation of KaiC3 was higher at 25 than at 30 or 35 degrees Celsius.

The catalysed reaction is L-seryl-[protein] + ATP = O-phospho-L-seryl-[protein] + ADP + H(+). It catalyses the reaction L-threonyl-[protein] + ATP = O-phospho-L-threonyl-[protein] + ADP + H(+). It carries out the reaction ATP + H2O = ADP + phosphate + H(+). Its activity is regulated as follows. ATPase activity is influenced by KaiB1 and KaiB3 in vitro; ATPase is reduced 35% by the KaiB1 tetramer and 55% by the KaiB3 monomer but not affected by KaiA or the KaiB3 tetramer. Its function is as follows. Seems to be linked to dark adaption of Synechocystis cells, but is not as essential as the core oscillator KaiAB1C1 for the circadian cycle. KaiB3 and KaiC3 may cross talk with the core oscillator. Autophosphorylates and dephosphorylates independently of KaiA. Has a weak ATPase, hydrolyzes 8.5 ATP/monomer/day, has no detectable ATP synthesis activity. ATPase activity reduced 55% by KaiB3 monomer but not the KaiB3 tetramer or KaiA in vitro, reduced 35% by KaiB1 tetramer. This Synechocystis sp. (strain ATCC 27184 / PCC 6803 / Kazusa) protein is Circadian clock protein KaiC3.